The chain runs to 281 residues: Aldo-keto reductase MMAR_1744 (281 aa).

The Proton donor role is filled by tyrosine 56. NADPH-binding residues include leucine 196, isoleucine 234, serine 237, threonine 245, asparagine 246, and arginine 272.

The protein belongs to the aldo/keto reductase family.

The chain is Aldo-keto reductase MMAR_1744 from Mycobacterium marinum (strain ATCC BAA-535 / M).